Reading from the N-terminus, the 356-residue chain is Histidinol-phosphate aminotransferase (356 aa).

Lys-214 bears the N6-(pyridoxal phosphate)lysine mark.

Belongs to the class-II pyridoxal-phosphate-dependent aminotransferase family. Histidinol-phosphate aminotransferase subfamily. In terms of assembly, homodimer. The cofactor is pyridoxal 5'-phosphate.

The catalysed reaction is L-histidinol phosphate + 2-oxoglutarate = 3-(imidazol-4-yl)-2-oxopropyl phosphate + L-glutamate. It functions in the pathway amino-acid biosynthesis; L-histidine biosynthesis; L-histidine from 5-phospho-alpha-D-ribose 1-diphosphate: step 7/9. The polypeptide is Histidinol-phosphate aminotransferase (Escherichia fergusonii (strain ATCC 35469 / DSM 13698 / CCUG 18766 / IAM 14443 / JCM 21226 / LMG 7866 / NBRC 102419 / NCTC 12128 / CDC 0568-73)).